The primary structure comprises 122 residues: Large ribosomal subunit protein uL14 (122 aa).

Forms a cluster with proteins L3 and L19. In the 70S ribosome, L14 and L19 interact and together make contacts with the 16S rRNA in bridges B5 and B8. Part of the 50S ribosomal subunit.

In terms of biological role, binds to 23S rRNA. Forms part of two intersubunit bridges in the 70S ribosome. The chain is Large ribosomal subunit protein uL14 from Rhodopseudomonas palustris (strain ATCC BAA-98 / CGA009).